Reading from the N-terminus, the 243-residue chain is uncharacterized protein (243 aa).

Residues 55-75 (IILIILLTIFMVISTLVIAFV) form a helical membrane-spanning segment.

Its subcellular location is the membrane. This is an uncharacterized protein from Rickettsia prowazekii (strain Madrid E).